Here is a 214-residue protein sequence, read N- to C-terminus: Riboflavin kinase (214 aa).

Residues 1–26 form a disordered region; that stretch reads MRPDGPRDPVVGPDSGPEPPYPVRLS. Residues Thr-44 and Asn-46 each contribute to the Mg(2+) site. Glu-112 serves as the catalytic Nucleophile.

The protein belongs to the flavokinase family. Zn(2+) is required as a cofactor. Requires Mg(2+) as cofactor.

The catalysed reaction is riboflavin + ATP = FMN + ADP + H(+). It participates in cofactor biosynthesis; FMN biosynthesis; FMN from riboflavin (ATP route): step 1/1. Functionally, catalyzes the phosphorylation of riboflavin (vitamin B2) to form flavin mononucleotide (FMN) coenzyme. In Aspergillus clavatus (strain ATCC 1007 / CBS 513.65 / DSM 816 / NCTC 3887 / NRRL 1 / QM 1276 / 107), this protein is Riboflavin kinase (fmn1).